The primary structure comprises 60 residues: MANLRITLVKSLIGRPETERKTARAMGLKKLHRQVVCPDTPVTRGQVQKLAHLVRVESIE.

It belongs to the universal ribosomal protein uL30 family. Part of the 50S ribosomal subunit.

The sequence is that of Large ribosomal subunit protein uL30 from Moorella thermoacetica (strain ATCC 39073 / JCM 9320).